The chain runs to 179 residues: Ribosome maturation factor RimM (179 aa).

Residues 95 to 174 (KDEFFYFDIL…QIFCTQDAFL (80 aa)) enclose the PRC barrel domain.

The protein belongs to the RimM family. As to quaternary structure, binds ribosomal protein uS19.

It is found in the cytoplasm. Functionally, an accessory protein needed during the final step in the assembly of 30S ribosomal subunit, possibly for assembly of the head region. Essential for efficient processing of 16S rRNA. May be needed both before and after RbfA during the maturation of 16S rRNA. It has affinity for free ribosomal 30S subunits but not for 70S ribosomes. The polypeptide is Ribosome maturation factor RimM (Campylobacter jejuni subsp. jejuni serotype O:2 (strain ATCC 700819 / NCTC 11168)).